The following is a 157-amino-acid chain: Crossover junction endodeoxyribonuclease RuvC (157 aa).

Residues Asp-7, Glu-67, and Asp-140 contribute to the active site. 3 residues coordinate Mg(2+): Asp-7, Glu-67, and Asp-140.

It belongs to the RuvC family. In terms of assembly, homodimer which binds Holliday junction (HJ) DNA. The HJ becomes 2-fold symmetrical on binding to RuvC with unstacked arms; it has a different conformation from HJ DNA in complex with RuvA. In the full resolvosome a probable DNA-RuvA(4)-RuvB(12)-RuvC(2) complex forms which resolves the HJ. The cofactor is Mg(2+).

The protein resides in the cytoplasm. It carries out the reaction Endonucleolytic cleavage at a junction such as a reciprocal single-stranded crossover between two homologous DNA duplexes (Holliday junction).. The RuvA-RuvB-RuvC complex processes Holliday junction (HJ) DNA during genetic recombination and DNA repair. Endonuclease that resolves HJ intermediates. Cleaves cruciform DNA by making single-stranded nicks across the HJ at symmetrical positions within the homologous arms, yielding a 5'-phosphate and a 3'-hydroxyl group; requires a central core of homology in the junction. The consensus cleavage sequence is 5'-(A/T)TT(C/G)-3'. Cleavage occurs on the 3'-side of the TT dinucleotide at the point of strand exchange. HJ branch migration catalyzed by RuvA-RuvB allows RuvC to scan DNA until it finds its consensus sequence, where it cleaves and resolves the cruciform DNA. The protein is Crossover junction endodeoxyribonuclease RuvC of Rickettsia akari (strain Hartford).